The sequence spans 263 residues: 4-hydroxy-2-oxo-heptane-1,7-dioate aldolase (263 aa).

Residue His-45 is the Proton acceptor of the active site. Gln-147 contributes to the substrate binding site. Position 149 (Glu-149) interacts with a divalent metal cation. Substrate-binding residues include Ala-174 and Asp-175. Residue Asp-175 participates in a divalent metal cation binding.

Belongs to the HpcH/HpaI aldolase family. As to quaternary structure, homohexamer; trimer of dimers. A divalent metal cation is required as a cofactor.

It carries out the reaction 4-hydroxy-2-oxoheptanedioate = succinate semialdehyde + pyruvate. Its pathway is aromatic compound metabolism; 4-hydroxyphenylacetate degradation; pyruvate and succinate semialdehyde from 4-hydroxyphenylacetate: step 7/7. Its function is as follows. Catalyzes the reversible retro-aldol cleavage of 4-hydroxy-2-ketoheptane-1,7-dioate (HKHD) to pyruvate and succinic semialdehyde. The protein is 4-hydroxy-2-oxo-heptane-1,7-dioate aldolase of Salmonella paratyphi A (strain ATCC 9150 / SARB42).